A 148-amino-acid polypeptide reads, in one-letter code: Large ribosomal subunit protein bL9 (148 aa).

It belongs to the bacterial ribosomal protein bL9 family.

Binds to the 23S rRNA. The polypeptide is Large ribosomal subunit protein bL9 (Pseudomonas putida (strain W619)).